We begin with the raw amino-acid sequence, 320 residues long: Cytochrome f (320 aa).

A signal peptide spans 1-35; it reads MQIRNTFSSLKGEITRFISVSLMIYIITRASISNA. Residues tyrosine 36, cysteine 56, cysteine 59, and histidine 60 each contribute to the heme site. A helical transmembrane segment spans residues 286 to 306; sequence VQGLLFFLASVVLAQIFLVLK.

This sequence belongs to the cytochrome f family. The 4 large subunits of the cytochrome b6-f complex are cytochrome b6, subunit IV (17 kDa polypeptide, petD), cytochrome f and the Rieske protein, while the 4 small subunits are PetG, PetL, PetM and PetN. The complex functions as a dimer. The cofactor is heme.

It is found in the plastid. It localises to the chloroplast thylakoid membrane. Functionally, component of the cytochrome b6-f complex, which mediates electron transfer between photosystem II (PSII) and photosystem I (PSI), cyclic electron flow around PSI, and state transitions. The sequence is that of Cytochrome f from Citrus sinensis (Sweet orange).